Here is a 272-residue protein sequence, read N- to C-terminus: Imidazole glycerol phosphate synthase subunit HisF (272 aa).

Active-site residues include D12 and D131.

Belongs to the HisA/HisF family. In terms of assembly, heterodimer of HisH and HisF.

It localises to the cytoplasm. It catalyses the reaction 5-[(5-phospho-1-deoxy-D-ribulos-1-ylimino)methylamino]-1-(5-phospho-beta-D-ribosyl)imidazole-4-carboxamide + L-glutamine = D-erythro-1-(imidazol-4-yl)glycerol 3-phosphate + 5-amino-1-(5-phospho-beta-D-ribosyl)imidazole-4-carboxamide + L-glutamate + H(+). The protein operates within amino-acid biosynthesis; L-histidine biosynthesis; L-histidine from 5-phospho-alpha-D-ribose 1-diphosphate: step 5/9. Functionally, IGPS catalyzes the conversion of PRFAR and glutamine to IGP, AICAR and glutamate. The HisF subunit catalyzes the cyclization activity that produces IGP and AICAR from PRFAR using the ammonia provided by the HisH subunit. In Methanopyrus kandleri (strain AV19 / DSM 6324 / JCM 9639 / NBRC 100938), this protein is Imidazole glycerol phosphate synthase subunit HisF.